The sequence spans 108 residues: UPF0060 membrane protein Nham_2004 (108 aa).

The next 4 helical transmembrane spans lie at 5 to 25 (AAYV…WAWL), 31 to 51 (VWWL…LTLV), 61 to 81 (AAYG…VEGL), and 88 to 108 (LTGA…PRQI).

The protein belongs to the UPF0060 family.

It localises to the cell inner membrane. In Nitrobacter hamburgensis (strain DSM 10229 / NCIMB 13809 / X14), this protein is UPF0060 membrane protein Nham_2004.